The following is a 578-amino-acid chain: Asparagine synthetase [glutamine-hydrolyzing] 2 (578 aa).

Cysteine 2 acts as the For GATase activity in catalysis. The 184-residue stretch at 2-185 (CGILAVLGCI…PGHIYSSKQG (184 aa)) folds into the Glutamine amidotransferase type-2 domain. L-glutamine-binding positions include 50 to 54 (RLAII), 75 to 77 (NGE), and aspartate 98. The Asparagine synthetase domain occupies 210–450 (LRNAFEKAVI…LPKHILYRQK (241 aa)). Residues leucine 231, isoleucine 267, and 341–342 (SG) each bind ATP.

Expressed in the vascular region adjacent to leaf mesophyll cells in the companion cell-sieve tube element complex.

The enzyme catalyses L-aspartate + L-glutamine + ATP + H2O = L-asparagine + L-glutamate + AMP + diphosphate + H(+). It functions in the pathway amino-acid biosynthesis; L-asparagine biosynthesis. Functionally, essential for nitrogen assimilation, distribution and remobilization within the plant via the phloem. The chain is Asparagine synthetase [glutamine-hydrolyzing] 2 (ASN2) from Arabidopsis thaliana (Mouse-ear cress).